Here is a 102-residue protein sequence, read N- to C-terminus: Large ribosomal subunit protein bL21 (102 aa).

It belongs to the bacterial ribosomal protein bL21 family. As to quaternary structure, part of the 50S ribosomal subunit. Contacts protein L20.

This protein binds to 23S rRNA in the presence of protein L20. This is Large ribosomal subunit protein bL21 from Myxococcus xanthus (strain DK1622).